Consider the following 263-residue polypeptide: Chaperone protein ClpE (263 aa).

The first 34 residues, 1-34 (MSKRNAVTTFFTNRVTKALGMTLALMMTCQSAMA), serve as a signal peptide directing secretion. Over residues 238–255 (QKKTPTSSGQKASDSLVN) the composition is skewed to polar residues. The tract at residues 238–263 (QKKTPTSSGQKASDSLVNPSDKADKK) is disordered.

The protein belongs to the periplasmic pilus chaperone family.

The protein resides in the periplasm. Functionally, involved in the biogenesis of the CS31A capsule-like antigen. In Escherichia coli, this protein is Chaperone protein ClpE (clpE).